The sequence spans 351 residues: 3-dehydroquinate synthase (351 aa).

Residues 60–65 (DGEEYK), 94–98 (GVISD), 118–119 (TT), K131, K140, and 158–161 (FLKT) contribute to the NAD(+) site. Positions 173, 239, and 256 each coordinate Zn(2+).

Belongs to the sugar phosphate cyclases superfamily. Dehydroquinate synthase family. The cofactor is NAD(+). Co(2+) serves as cofactor. Requires Zn(2+) as cofactor.

It localises to the cytoplasm. It catalyses the reaction 7-phospho-2-dehydro-3-deoxy-D-arabino-heptonate = 3-dehydroquinate + phosphate. It participates in metabolic intermediate biosynthesis; chorismate biosynthesis; chorismate from D-erythrose 4-phosphate and phosphoenolpyruvate: step 2/7. Functionally, catalyzes the conversion of 3-deoxy-D-arabino-heptulosonate 7-phosphate (DAHP) to dehydroquinate (DHQ). The sequence is that of 3-dehydroquinate synthase from Campylobacter jejuni subsp. jejuni serotype O:2 (strain ATCC 700819 / NCTC 11168).